The following is a 284-amino-acid chain: Tropomyosin (284 aa).

Positions M1–Y284 form a coiled coil. Residues L113–N142 show a composition bias toward basic and acidic residues. The tract at residues L113–T143 is disordered.

Belongs to the tropomyosin family.

Tropomyosin, in association with the troponin complex, plays a central role in the calcium dependent regulation of muscle contraction. The polypeptide is Tropomyosin (Acanthocheilonema viteae (Filarial nematode worm)).